Here is a 369-residue protein sequence, read N- to C-terminus: Carbamoyl phosphate synthase small chain (369 aa).

Positions 1–168 are CPSase; the sequence is MYGILVLEDG…KKVVKYPAKD (168 aa). Residues Ser-45, Gly-220, and Gly-222 each coordinate L-glutamine. Positions 172–364 constitute a Glutamine amidotransferase type-1 domain; the sequence is SCVVIDCGVK…VALGMKFKQE (193 aa). Cys-247 serves as the catalytic Nucleophile. The L-glutamine site is built by Leu-248, Gln-251, Asn-289, Gly-291, and Phe-292. Catalysis depends on residues His-337 and Glu-339.

Belongs to the CarA family. In terms of assembly, composed of two chains; the small (or glutamine) chain promotes the hydrolysis of glutamine to ammonia, which is used by the large (or ammonia) chain to synthesize carbamoyl phosphate. Tetramer of heterodimers (alpha,beta)4.

It catalyses the reaction hydrogencarbonate + L-glutamine + 2 ATP + H2O = carbamoyl phosphate + L-glutamate + 2 ADP + phosphate + 2 H(+). The catalysed reaction is L-glutamine + H2O = L-glutamate + NH4(+). It functions in the pathway amino-acid biosynthesis; L-arginine biosynthesis; carbamoyl phosphate from bicarbonate: step 1/1. Its pathway is pyrimidine metabolism; UMP biosynthesis via de novo pathway; (S)-dihydroorotate from bicarbonate: step 1/3. Small subunit of the glutamine-dependent carbamoyl phosphate synthetase (CPSase). CPSase catalyzes the formation of carbamoyl phosphate from the ammonia moiety of glutamine, carbonate, and phosphate donated by ATP, constituting the first step of 2 biosynthetic pathways, one leading to arginine and/or urea and the other to pyrimidine nucleotides. The small subunit (glutamine amidotransferase) binds and cleaves glutamine to supply the large subunit with the substrate ammonia. The chain is Carbamoyl phosphate synthase small chain from Methanococcus vannielii (strain ATCC 35089 / DSM 1224 / JCM 13029 / OCM 148 / SB).